The sequence spans 467 residues: Transcriptional modulator WTM2 (467 aa).

Positions 1-12 are enriched in low complexity; that stretch reads MAKSKSSQGASG. 2 disordered regions span residues 1 to 22 and 84 to 121; these read MAKSKSSQGASGARRKPAPSLY and TFYDDDDDDDNDDDDEEGNGKTKSAATPNPEYGDAFQD. Residues 87–100 are compositionally biased toward acidic residues; that stretch reads DDDDDDDNDDDDEE. 3 WD repeats span residues 244–282, 287–327, and 349–389; these read PGTNVAHSVRFFNNHLFASCSDDNILRFWDTRTADKPLW, PKNG…LATT, and SGGD…SRND.

Its function is as follows. Transcriptional modulator with roles in meiotic regulation and silencing. The sequence is that of Transcriptional modulator WTM2 (WTM2) from Saccharomyces cerevisiae (strain ATCC 204508 / S288c) (Baker's yeast).